A 470-amino-acid polypeptide reads, in one-letter code: Putative gustatory receptor 28b (470 aa).

The Cytoplasmic segment spans residues 1–76; the sequence is MDIEMAKEPV…KTGKKAIKKT (76 aa). The chain crosses the membrane as a helical span at residues 77–97; the sequence is IFGYINGIMHIAMFVFAYSLT. Over 98 to 119 the chain is Extracellular; that stretch reads IYNNCESVASYFFRSRITYFGD. Residues 120–140 form a helical membrane-spanning segment; sequence LMQIVSGFIGVTVIYLTAFVP. At 141 to 175 the chain is on the cytoplasmic side; the sequence is NHRLERCLQKFHTMDVQLQTVGVKIMYSKVLRFSY. A helical membrane pass occupies residues 176–196; it reads MVLISMFLVNVLFTGGTFSVL. At 197 to 204 the chain is on the extracellular side; it reads YSSEVAPT. Residues 205–225 traverse the membrane as a helical segment; the sequence is MALHFTFLIQHTVIAIAIALF. The Cytoplasmic portion of the chain corresponds to 226-309; that stretch reads SCFTYLVEMR…ATANKYFTYQ (84 aa). A helical membrane pass occupies residues 310–330; the sequence is LLTIISIAFLIIVFDAYYVLE. The Extracellular segment spans residues 331–346; it reads TLLGKSKRESKFKTVE. Residues 347–367 traverse the membrane as a helical segment; it reads FVTFFSCQMILYLIAIISIVE. The Cytoplasmic segment spans residues 368–423; sequence GSNRAIKKSEKTGGIVHSLLNKTKSAEVKEKLQQFSMQLMHLKINFTAAGLFNIDR. A helical transmembrane segment spans residues 424 to 444; sequence TLYFTISGALTTYLIILLQFT. The Extracellular portion of the chain corresponds to 445-470; it reads SNSPNNGYGNGSSCCETFNNMTNHTL. Asn-454, Asn-464, and Asn-467 each carry an N-linked (GlcNAc...) asparagine glycan.

The protein belongs to the insect chemoreceptor superfamily. Gustatory receptor (GR) family. Gr66a subfamily. Isoforms A and E have taste neuron-specific expression restricted to the labial palps, the internal taste organs in the pharynx, and the legs. In addition to expression in a large number of taste neurons, isoform A is also expressed in a few nonchemosensory neurons, including the campaniform sensilla of the wing, leg stretch receptors, and multiple dendritic neurons in the abdomen. Isoform B is the only receptor not expressed in gustatory receptor neurons in the labellum. We observe expression of this receptor in a single large cell at the base of each maxillary palp, in campaniform sensilla of the wing, and multiple dendritic neurons in the abdomen. Isoform C is expressed by many gustatory receptor neurons in the labial palps, the pharyngeal taste clusters, and taste neurons in the legs. In addition, isoform C expressed in a single cell at the base of the maxillary palps, neurons in the Johnston's organ (JO), campaniform sensilla of the wing, stretch receptors and the femoral chordotonal organ of the legs, and multiple dendritic neurons in the abdomen. Isoform D is expressed in a small number of gustatory receptor neurons in the labial palps, the ventral cibarial sense organ (VCSO), and legs. Atypical expression is observed in three neurons in the arista, campaniform sensilla of the wing, stretch and femoral chordotonal organ receptors in the legs, and multiple dendritic neurons in the abdomen. In larvae, Isoform A is expressed in neurons of the terminal external chemosensory organ and the dorsal external chemosensory organ; and isoform E is expressed in neurons of the terminal external chemosensory organ.

It localises to the cell membrane. Functionally, probable gustatory receptor which mediates acceptance or avoidance behavior, depending on its substrates. Atypical expression also suggests nongustatory roles in the nervous system and tissues involved in proprioception, hygroreception, and other sensory modalities. It is also possible that it has chemosensory roles in the detection of internal ligands. This Drosophila melanogaster (Fruit fly) protein is Putative gustatory receptor 28b (Gr28b).